Here is a 415-residue protein sequence, read N- to C-terminus: PRKCA-binding protein (415 aa).

Residues 22–105 (KVTLQKDAQN…EVTIHYNKLQ (84 aa)) form the PDZ domain. Zn(2+)-binding residues include C44 and C46. The residue at position 82 (T82) is a Phosphothreonine. The region spanning 144–357 (LCNDGLVKRL…CYAVLRDADV (214 aa)) is the AH domain. Positions 376–415 (EEFTDGEEEEEEEDTAAGEPSRDTRGAAGPLDKGGSWCDS) are disordered. The segment covering 377-391 (EFTDGEEEEEEEDTA) has biased composition (acidic residues). A lipid anchor (S-palmitoyl cysteine; by DHHC8) is attached at C413.

In terms of assembly, monomer and homodimer. Interacts with CXADR. Interacts presynaptically with the glutamate receptors GRIA2, GRIA3, GRIK3, isoform 3 of GRIA4, isoform A of GRM4, GRM7 and GRM8; with NAPA and NAPB; and with BTG2. The interaction with NAPA and NAPB disrupts the interaction with GRIA2, conducting to the internalization of GRIA2. Interacts with PRKCA; with the amine transporters SLC6A2 and SLC6A3; with the channels ASIC1 and ASIC2; with the GTP-binding proteins ARF1 and ARF3; with the ephrin receptor tyrosine kinases EPHA7, EPHB1 and EPHB2; with ERBB2 and through its PDZ domain with the C-terminal tail of PRLHR. Interacts with UNC5A. Interacts (via AH domain) with NCS1/FREQ; in a calcium-dependent manner. Interacts with F-actin and associates with the ARP2/3 complex. Interacts (via PDZ domain) with ARF1 (activated); the interaction blocks Arp2/3 complex inhibition. Interacts with SORCS3. Post-translationally, phosphorylation at Thr-82 appears to inhibit the interaction with AMPA receptors. Palmitoylation on Cys-413 is essential for long-term synaptic depression (LTD). Ubiquitous.

It is found in the cytoplasm. It localises to the perinuclear region. The protein resides in the membrane. The protein localises to the postsynaptic density. Its subcellular location is the synapse. It is found in the synaptosome. It localises to the cytoskeleton. Probable adapter protein that bind to and organize the subcellular localization of a variety of membrane proteins containing some PDZ recognition sequence. Involved in the clustering of various receptors, possibly by acting at the receptor internalization level. Plays a role in synaptic plasticity by regulating the trafficking and internalization of AMPA receptors. May be regulated upon PRKCA activation. May regulate ASIC1/ASIC3 channel. Regulates actin polymerization by inhibiting the actin-nucleating activity of the Arp2/3 complex; the function is competitive with nucleation promoting factors and is linked to neuronal morphology regulation and AMPA receptor (AMPAR) endocytosis. Via interaction with the Arp2/3 complex involved in regulation of synaptic plasicity of excitatory synapses and required for spine shrinkage during long-term depression (LTD). Involved in regulation of astrocyte morphology, antagonistic to Arp2/3 complex activator WASL/N-WASP function. This is PRKCA-binding protein (PICK1) from Homo sapiens (Human).